Here is a 264-residue protein sequence, read N- to C-terminus: Large ribosomal subunit protein mL50 (264 aa).

The transit peptide at 1 to 75 directs the protein to the mitochondrion; sequence MSSLLKLHCI…EEGTNEASSQ (75 aa).

The protein belongs to the mitochondrion-specific ribosomal protein mL50 family. Component of the mitochondrial large ribosomal subunit (mt-LSU). Mature yeast 74S mitochondrial ribosomes consist of a small (37S) and a large (54S) subunit. The 37S small subunit contains a 15S ribosomal RNA (15S mt-rRNA) and 34 different proteins. The 54S large subunit contains a 21S rRNA (21S mt-rRNA) and 46 different proteins.

The protein localises to the mitochondrion. Component of the mitochondrial ribosome (mitoribosome), a dedicated translation machinery responsible for the synthesis of mitochondrial genome-encoded proteins, including at least some of the essential transmembrane subunits of the mitochondrial respiratory chain. The mitoribosomes are attached to the mitochondrial inner membrane and translation products are cotranslationally integrated into the membrane. In Saccharomyces cerevisiae (strain ATCC 204508 / S288c) (Baker's yeast), this protein is Large ribosomal subunit protein mL50 (MRPL13).